Consider the following 217-residue polypeptide: Large ribosomal subunit protein uL4 (217 aa).

A disordered region spans residues 46–103; sequence KRQGTHATKTRGMVSGGGRKPFRQKGTGRARQGSIRAPHFTGGGTVHGPQPRDYSQRT.

Belongs to the universal ribosomal protein uL4 family. As to quaternary structure, part of the 50S ribosomal subunit.

In terms of biological role, one of the primary rRNA binding proteins, this protein initially binds near the 5'-end of the 23S rRNA. It is important during the early stages of 50S assembly. It makes multiple contacts with different domains of the 23S rRNA in the assembled 50S subunit and ribosome. Its function is as follows. Forms part of the polypeptide exit tunnel. In Corynebacterium jeikeium (strain K411), this protein is Large ribosomal subunit protein uL4.